We begin with the raw amino-acid sequence, 139 residues long: GSK3B-interacting protein (139 aa).

The disordered stretch occupies residues 1 to 22; it reads METDCNPMELSSMSGFEEGSEL. A required for PRKAR2A interaction; contributes to a protective effect against H(2)O(2)-induced apoptosis region spans residues 41-45; that stretch reads VNDVL. The tract at residues 115-139 is interaction with GSK3B and acts as a GSK3B inhibitor; the sequence is SPAYREAFGNALLQRLEALKRDGQS.

It belongs to the GSKIP family. In terms of assembly, forms a complex composed of PRKAR2A or PRKAR2B, GSK3B and GSKIP through GSKIP interaction; facilitates PKA-induced phosphorylation of GSK3B leading to GSK3B inactivation; recruits DNM1L through GSK3B for PKA-mediated phosphorylation of DNM1L; promotes beta-catenin degradation through GSK3B-induced phosphorylation of beta-catenin; stabilizes beta-catenin and enhances Wnt-induced signaling through PKA-induced phosphorylation of beta-catenin. Interacts with GSK3B; induces GSK3B-mediated phosphorylation of GSKIP and inhibits GSK3B kinase activity. In terms of processing, phosphorylated by GSK3B. In terms of tissue distribution, detected in heart, brain, placenta, liver, skeletal muscle, kidney, testis, lung and pancreas.

It localises to the cytoplasm. The protein resides in the nucleus. Its function is as follows. A-kinase anchoring protein for GSK3B and PKA that regulates or facilitates their kinase activity towards their targets. The ternary complex enhances Wnt-induced signaling by facilitating the GSK3B- and PKA-induced phosphorylation of beta-catenin leading to beta-catenin degradation and stabilization respectively. Upon cAMP activation, the ternary complex contributes to neuroprotection against oxidative stress-induced apoptosis by facilitating the PKA-induced phosphorylation of DML1 and PKA-induced inactivation of GSK3B. During neurite outgrowth promotes neuron proliferation; while increases beta-catenin-induced transcriptional activity through GSK3B kinase activity inhibition, reduces N-cadherin level to promote cell cycle progression. The protein is GSK3B-interacting protein of Homo sapiens (Human).